The chain runs to 411 residues: Dual-specificity RNA methyltransferase RlmN (411 aa).

The Proton acceptor role is filled by Glu-125. The 250-residue stretch at 131–380 (EEGRGTLCVS…IRTPRGRDIL (250 aa)) folds into the Radical SAM core domain. Cysteines 138 and 383 form a disulfide. Residues Cys-145, Cys-149, and Cys-152 each coordinate [4Fe-4S] cluster. S-adenosyl-L-methionine contacts are provided by residues 209–210 (GE), Ser-241, 263–265 (SLH), and Asn-340. Catalysis depends on Cys-383, which acts as the S-methylcysteine intermediate.

It belongs to the radical SAM superfamily. RlmN family. [4Fe-4S] cluster is required as a cofactor.

Its subcellular location is the cytoplasm. The catalysed reaction is adenosine(2503) in 23S rRNA + 2 reduced [2Fe-2S]-[ferredoxin] + 2 S-adenosyl-L-methionine = 2-methyladenosine(2503) in 23S rRNA + 5'-deoxyadenosine + L-methionine + 2 oxidized [2Fe-2S]-[ferredoxin] + S-adenosyl-L-homocysteine. The enzyme catalyses adenosine(37) in tRNA + 2 reduced [2Fe-2S]-[ferredoxin] + 2 S-adenosyl-L-methionine = 2-methyladenosine(37) in tRNA + 5'-deoxyadenosine + L-methionine + 2 oxidized [2Fe-2S]-[ferredoxin] + S-adenosyl-L-homocysteine. Functionally, specifically methylates position 2 of adenine 2503 in 23S rRNA and position 2 of adenine 37 in tRNAs. m2A2503 modification seems to play a crucial role in the proofreading step occurring at the peptidyl transferase center and thus would serve to optimize ribosomal fidelity. This Brucella anthropi (strain ATCC 49188 / DSM 6882 / CCUG 24695 / JCM 21032 / LMG 3331 / NBRC 15819 / NCTC 12168 / Alc 37) (Ochrobactrum anthropi) protein is Dual-specificity RNA methyltransferase RlmN.